Here is a 379-residue protein sequence, read N- to C-terminus: MTEPTIHKGLAGVTADVTAISKVNSDTNSLLYRGYPVQELAAKCSFEQVAYLLWNSELPNDSELKAFVNFERSHRKLDENVKGAIDLLSTACHPMDVARTAVSVLGANHARAQDSSPEANLEKAMSLLATFPSVVAYDQRRRRGEELIEPREDLDYSANFLWMTFGEEAAPEVVEAFNVSMILYAEHSFNASTFTARVITSTLADLHSAVTGAIGALKGPLHGGANEAVMHTFEEIGIRKDESLDEAATRSKAWMVDALAQKKKVMGFGHRVYKNGDSRVPTMKSALDAMIKHYDRPEMLGLYNGLEAAMEEAKQIKPNLDYPAGPTYNLMGFDTEMFTPLFIAARITGWTAHIMEQVADNALIRPLSEYNGPEQRQVP.

H187 serves as a coordination point for substrate. H222 is an active-site residue. 264-268 (KVMGF) is a binding site for CoA. H270 is an active-site residue. R279 is a substrate binding site. The active site involves D321. Substrate contacts are provided by R346 and R365.

The protein belongs to the citrate synthase family. Homodimer.

The enzyme catalyses propanoyl-CoA + oxaloacetate + H2O = (2S,3S)-2-methylcitrate + CoA + H(+). It carries out the reaction oxaloacetate + acetyl-CoA + H2O = citrate + CoA + H(+). It participates in organic acid metabolism; propanoate degradation. The protein operates within carbohydrate metabolism; tricarboxylic acid cycle; isocitrate from oxaloacetate: step 1/2. Functionally, involved in the catabolism of short chain fatty acids (SCFA) via the tricarboxylic acid (TCA)(acetyl degradation route) and via the 2-methylcitrate cycle I (propionate degradation route). Catalyzes the Claisen condensation of propionyl-CoA and oxaloacetate (OAA) to yield 2-methylcitrate (2-MC) and CoA. Also catalyzes the condensation of oxaloacetate with acetyl-CoA but with a lower specificity. This is 2-methylcitrate synthase (gltA) from Antarctic bacterium DS2-3R.